Here is a 155-residue protein sequence, read N- to C-terminus: Cardio acceleratory peptide 2b (155 aa).

A signal peptide spans 1–26; it reads MKAIFSLYNIVSAILLLVLLAEFSTA. The propeptide occupies 27–33; that stretch reads ELNHDKN. Val-47 carries the valine amide modification. Positions 50-85 are excised as a propeptide; the sequence is SDPSLANSLRDASDAAVFDGLYGDASQEDYNEADYQ. Val-96 carries the post-translational modification Valine amide. A propeptide spanning residues 99–117 is cleaved from the precursor; the sequence is SDAELRKFAHLLALQQVLD. Position 134 is a leucine amide (Leu-134). The propeptide occupies 138–155; that stretch reads SVDAKAFSDASKGQQEFN.

This sequence belongs to the pyrokinin family.

It localises to the secreted. Its function is as follows. CAP-1 and CAP-2, but not CAP-3 are ligands for the Capa receptor. CAP-1 and CAP-2 are probably components of the signal transduction pathway that leads to Malpighian tubule fluid secretion via the second messenger nitric oxide. This Drosophila pseudoobscura pseudoobscura (Fruit fly) protein is Cardio acceleratory peptide 2b.